We begin with the raw amino-acid sequence, 156 residues long: Ribosomal RNA large subunit methyltransferase H (156 aa).

Residues Leu-73, Gly-104, and 123 to 128 (IGPLTL) contribute to the S-adenosyl-L-methionine site.

This sequence belongs to the RNA methyltransferase RlmH family. As to quaternary structure, homodimer.

Its subcellular location is the cytoplasm. The enzyme catalyses pseudouridine(1915) in 23S rRNA + S-adenosyl-L-methionine = N(3)-methylpseudouridine(1915) in 23S rRNA + S-adenosyl-L-homocysteine + H(+). Its function is as follows. Specifically methylates the pseudouridine at position 1915 (m3Psi1915) in 23S rRNA. This is Ribosomal RNA large subunit methyltransferase H from Xanthomonas euvesicatoria pv. vesicatoria (strain 85-10) (Xanthomonas campestris pv. vesicatoria).